Reading from the N-terminus, the 1465-residue chain is Transcriptional elongation regulator MINIYO (1465 aa).

Disordered regions lie at residues 27-85 (KGIS…AEER), 186-211 (LNAS…ESDI), and 1113-1135 (TIHE…SSTI).

It belongs to the RPAP1 family. Interacts with HAG3, NRPB3 and NRPB10L. As to expression, expressed in root and shoot apices and in leaf and flower primordia. Detected in the endosperm, embryo, meristems and in organ primordia, but not in mature cells. Found exclusively in the vascular bundles in mature leaves.

Its subcellular location is the cytoplasm. It is found in the nucleus. Positive regulator of transcriptional elongation that is essential for cells to initiate differentiation. Interacts with RNA polymerase II and the Elongator complex and is required to sustain global levels of transcriptional elongation activity, specifically in differentiating tissues. In Arabidopsis thaliana (Mouse-ear cress), this protein is Transcriptional elongation regulator MINIYO.